Consider the following 62-residue polypeptide: Large ribosomal subunit protein uL29 (62 aa).

Belongs to the universal ribosomal protein uL29 family.

In Chromobacterium violaceum (strain ATCC 12472 / DSM 30191 / JCM 1249 / CCUG 213 / NBRC 12614 / NCIMB 9131 / NCTC 9757 / MK), this protein is Large ribosomal subunit protein uL29.